A 529-amino-acid polypeptide reads, in one-letter code: Bifunctional purine biosynthesis protein PurH (529 aa).

In terms of domain architecture, MGS-like spans 1-148 (MQQRRPVRRA…KNHKDVAIVV (148 aa)).

This sequence belongs to the PurH family.

The catalysed reaction is (6R)-10-formyltetrahydrofolate + 5-amino-1-(5-phospho-beta-D-ribosyl)imidazole-4-carboxamide = 5-formamido-1-(5-phospho-D-ribosyl)imidazole-4-carboxamide + (6S)-5,6,7,8-tetrahydrofolate. It carries out the reaction IMP + H2O = 5-formamido-1-(5-phospho-D-ribosyl)imidazole-4-carboxamide. Its pathway is purine metabolism; IMP biosynthesis via de novo pathway; 5-formamido-1-(5-phospho-D-ribosyl)imidazole-4-carboxamide from 5-amino-1-(5-phospho-D-ribosyl)imidazole-4-carboxamide (10-formyl THF route): step 1/1. It functions in the pathway purine metabolism; IMP biosynthesis via de novo pathway; IMP from 5-formamido-1-(5-phospho-D-ribosyl)imidazole-4-carboxamide: step 1/1. This Salmonella paratyphi C (strain RKS4594) protein is Bifunctional purine biosynthesis protein PurH.